Reading from the N-terminus, the 292-residue chain is MSNANFNRGPAYGLSAEVKNKLAQKYDPQTERQLRVWIEGATGRRIGDNFMDGLKDGVILCELINKLQPGSVQKVNDPVQNWHKLENIGNFLRAIKHYGVKPHDIFEANDLFENTNHTQVQSTLIALASQAKTKGNNVGLGVKYAEKQQRRFQPEKLREGRNIIGLQMGTNKFASQQGMTAYGTRRHLYDPKLGTDQPLDQATISLQMGTNKGASQAGMTAPGTKRQIFEPSLGMERCDTNIIGLQMGSNKGASQQGMTVYGLPRQVYDPKYCDAPGLLGEDGLNHSFYNSQ.

The Calponin-homology (CH) domain maps to Pro-28–Ala-131. 3 Calponin-like repeats span residues Ile-164–Tyr-189, Ile-204–Phe-229, and Ile-243–Tyr-268. Phosphothreonine; by ROCK2 is present on Thr-170. The residue at position 175 (Ser-175) is a Phosphoserine; by PKC, CaMK2 and ROCK2. 2 positions are modified to phosphothreonine; by ROCK2: Thr-180 and Thr-184. Thr-184 bears the Phosphothreonine; by PKC and CaMK2 mark. A calmodulin-binding region spans residues Arg-185 to Leu-193. Thr-259 is subject to Phosphothreonine; by ROCK2.

This sequence belongs to the calponin family. In terms of processing, phosphorylation by PKC or CaM kinase II reduces the binding of calponin to F-actin and tropomyosin. In terms of tissue distribution, smooth muscle, and tissues containing significant amounts of smooth muscle.

Functionally, thin filament-associated protein that is implicated in the regulation and modulation of smooth muscle contraction. It is capable of binding to actin, calmodulin and tropomyosin. The interaction of calponin with actin inhibits the actomyosin Mg-ATPase activity. The chain is Calponin-1 (CNN1) from Gallus gallus (Chicken).